The chain runs to 737 residues: Palmitoyltransferase akr1 (737 aa).

The span at 1–15 (MSSGNSSTGTHTNGN) shows a compositional bias: low complexity. The disordered stretch occupies residues 1-39 (MSSGNSSTGTHTNGNFATLGSSPPSAVGGKGRAIPPKVT). Residues 1–313 (MSSGNSSTGT…WVRNKSLMSK (313 aa)) lie on the Cytoplasmic side of the membrane. ANK repeat units follow at residues 96–125 (EGIT…DVNA), 130–159 (SVAT…DPLL), 163–192 (QGYN…PVDV), 196–225 (QGHT…HANA), and 228–258 (EGGL…DKFA). 2 consecutive transmembrane segments (helical) span residues 314-334 (FFFL…SNMV) and 335-355 (VYAA…VAQK). Residues 356–374 (AASQGPSEYRILQKTPYLS) lie on the Cytoplasmic side of the membrane. Residues 375-395 (GVFAGSLFWVGFRYVFYVLPV) form a helical membrane-spanning segment. The Lumenal portion of the chain corresponds to 396–401 (TYSTSP). The chain crosses the membrane as a helical span at residues 402-422 (ILNGLFAIFFSLTTYFYIYSM). Residues 423 to 498 (VEDPGFVPKL…DNCVGANNLR (76 aa)) are Cytoplasmic-facing. A DHHC domain is found at 455–505 (NFCVSCMVRRPLRSKHCKRCARCVAKHDHHCPWIDNCVGANNLRHFVLYIT). The active-site S-palmitoyl cysteine intermediate is the C485. Residues 499–519 (HFVLYITCLEVGIVLFVQLTF) traverse the membrane as a helical segment. Residues 520 to 548 (NYINSLPAPAQPQCNIINETLCDFVLRDT) lie on the Lumenal side of the membrane. A helical transmembrane segment spans residues 549-569 (FTLVLDLWVCIQLVWITMLVA). Topologically, residues 570–737 (VQMIQISRNQ…LSVEDPEQGV (168 aa)) are cytoplasmic.

Belongs to the DHHC palmitoyltransferase family. AKR/ZDHHC17 subfamily.

The protein localises to the early endosome membrane. Its subcellular location is the golgi apparatus membrane. The enzyme catalyses L-cysteinyl-[protein] + hexadecanoyl-CoA = S-hexadecanoyl-L-cysteinyl-[protein] + CoA. Its function is as follows. Palmitoyltransferase specific for casein kinase 1. This chain is Palmitoyltransferase akr1 (akr1), found in Aspergillus oryzae (strain ATCC 42149 / RIB 40) (Yellow koji mold).